Reading from the N-terminus, the 145-residue chain is Transcriptional regulator SlyA (145 aa).

Residues 2–135 form the HTH marR-type domain; that stretch reads ELPLGSDLAR…LALLVARLEK (134 aa). The segment at residues 49–72 is a DNA-binding region (H-T-H motif); the sequence is QIQLAKAIGIEQPSLVRTLDQLEE.

The protein belongs to the SlyA family. In terms of assembly, homodimer.

In terms of biological role, transcription regulator that can specifically activate or repress expression of target genes. The polypeptide is Transcriptional regulator SlyA (Pectobacterium atrosepticum (strain SCRI 1043 / ATCC BAA-672) (Erwinia carotovora subsp. atroseptica)).